The sequence spans 701 residues: Elongation factor G (701 aa).

The region spanning 10-290 (AKVRNIGIMA…AVVDYLPSPL (281 aa)) is the tr-type G domain. GTP-binding positions include 19–26 (AHIDAGKT), 83–87 (DTPGH), and 137–140 (NKMD).

Belongs to the TRAFAC class translation factor GTPase superfamily. Classic translation factor GTPase family. EF-G/EF-2 subfamily.

Its subcellular location is the cytoplasm. Its function is as follows. Catalyzes the GTP-dependent ribosomal translocation step during translation elongation. During this step, the ribosome changes from the pre-translocational (PRE) to the post-translocational (POST) state as the newly formed A-site-bound peptidyl-tRNA and P-site-bound deacylated tRNA move to the P and E sites, respectively. Catalyzes the coordinated movement of the two tRNA molecules, the mRNA and conformational changes in the ribosome. This is Elongation factor G from Tropheryma whipplei (strain Twist) (Whipple's bacillus).